The following is a 409-amino-acid chain: Na(+)-translocating NADH-quinone reductase subunit F (409 aa).

Residues 5–25 (FIFGIGAFTAIVLVLAVVILI) traverse the membrane as a helical segment. The 2Fe-2S ferredoxin-type domain occupies 34–128 (GDITISINND…SMDVELPEEV (95 aa)). The [2Fe-2S] cluster site is built by cysteine 71, cysteine 77, cysteine 80, and cysteine 112. One can recognise an FAD-binding FR-type domain in the interval 131–271 (VKKWECTVIS…SGPFGEFFAK (141 aa)).

The protein belongs to the NqrF family. As to quaternary structure, composed of six subunits; NqrA, NqrB, NqrC, NqrD, NqrE and NqrF. [2Fe-2S] cluster is required as a cofactor. Requires FAD as cofactor.

The protein localises to the cell inner membrane. It carries out the reaction a ubiquinone + n Na(+)(in) + NADH + H(+) = a ubiquinol + n Na(+)(out) + NAD(+). Functionally, NQR complex catalyzes the reduction of ubiquinone-1 to ubiquinol by two successive reactions, coupled with the transport of Na(+) ions from the cytoplasm to the periplasm. The first step is catalyzed by NqrF, which accepts electrons from NADH and reduces ubiquinone-1 to ubisemiquinone by a one-electron transfer pathway. The sequence is that of Na(+)-translocating NADH-quinone reductase subunit F from Mannheimia succiniciproducens (strain KCTC 0769BP / MBEL55E).